Consider the following 128-residue polypeptide: Gastrotropin (128 aa).

Ala-2 bears the N-acetylalanine mark.

The protein belongs to the calycin superfamily. Fatty-acid binding protein (FABP) family.

Its subcellular location is the cytoplasm. It localises to the membrane. Its function is as follows. Binds to bile acids and is involved in enterohepatic bile acid metabolism. Required for efficient apical to basolateral transport of conjugated bile acids in ileal enterocytes. Stimulates gastric acid and pepsinogen secretion. In Bos taurus (Bovine), this protein is Gastrotropin (FABP6).